The sequence spans 154 residues: Endoribonuclease YbeY (154 aa).

Zn(2+) contacts are provided by His-114, His-118, and His-124.

Belongs to the endoribonuclease YbeY family. It depends on Zn(2+) as a cofactor.

The protein localises to the cytoplasm. In terms of biological role, single strand-specific metallo-endoribonuclease involved in late-stage 70S ribosome quality control and in maturation of the 3' terminus of the 16S rRNA. The chain is Endoribonuclease YbeY from Marinomonas sp. (strain MWYL1).